The sequence spans 210 residues: 3-hexulose-6-phosphate synthase (210 aa).

This sequence belongs to the HPS/KGPDC family. HPS subfamily.

It carries out the reaction D-ribulose 5-phosphate + formaldehyde = D-arabino-hex-3-ulose 6-phosphate. It functions in the pathway one-carbon metabolism; formaldehyde assimilation via RuMP pathway; D-fructose 6-phosphate from D-ribulose 5-phosphate and formaldehyde: step 1/2. Functionally, catalyzes the condensation of ribulose 5-phosphate with formaldehyde to form 3-hexulose 6-phosphate. This Staphylococcus epidermidis (strain ATCC 12228 / FDA PCI 1200) protein is 3-hexulose-6-phosphate synthase.